Reading from the N-terminus, the 236-residue chain is Ubiquinone biosynthesis O-methyltransferase (236 aa).

Arg36, Gly56, Asp77, and Met125 together coordinate S-adenosyl-L-methionine.

The protein belongs to the methyltransferase superfamily. UbiG/COQ3 family.

The enzyme catalyses a 3-demethylubiquinol + S-adenosyl-L-methionine = a ubiquinol + S-adenosyl-L-homocysteine + H(+). It catalyses the reaction a 3-(all-trans-polyprenyl)benzene-1,2-diol + S-adenosyl-L-methionine = a 2-methoxy-6-(all-trans-polyprenyl)phenol + S-adenosyl-L-homocysteine + H(+). It participates in cofactor biosynthesis; ubiquinone biosynthesis. O-methyltransferase that catalyzes the 2 O-methylation steps in the ubiquinone biosynthetic pathway. The sequence is that of Ubiquinone biosynthesis O-methyltransferase from Glaesserella parasuis serovar 5 (strain SH0165) (Haemophilus parasuis).